We begin with the raw amino-acid sequence, 247 residues long: DNA repair protein RecO (247 aa).

This sequence belongs to the RecO family.

In terms of biological role, involved in DNA repair and RecF pathway recombination. The sequence is that of DNA repair protein RecO from Brucella abortus (strain 2308).